Here is a 147-residue protein sequence, read N- to C-terminus: Nucleoside diphosphate kinase (147 aa).

ATP is bound by residues Lys-9, Arg-85, Thr-91, Arg-102, and Asn-112. The Pros-phosphohistidine intermediate role is filled by His-115.

It belongs to the NDK family. The cofactor is Mg(2+).

The enzyme catalyses a 2'-deoxyribonucleoside 5'-diphosphate + ATP = a 2'-deoxyribonucleoside 5'-triphosphate + ADP. It carries out the reaction a ribonucleoside 5'-diphosphate + ATP = a ribonucleoside 5'-triphosphate + ADP. Its function is as follows. Major role in the synthesis of nucleoside triphosphates other than ATP. The ATP gamma phosphate is transferred to the NDP beta phosphate via a ping-pong mechanism, using a phosphorylated active-site intermediate. The protein is Nucleoside diphosphate kinase (NDK1) of Encephalitozoon cuniculi (strain GB-M1) (Microsporidian parasite).